The chain runs to 1623 residues: MADGEHTLPADEELFEQPPPQQQQPEIAEPIVMAQEPIQGVSEDPQASEATHEAPDNYPVDHQMENQEFYHEPQIPEPQQIPQIPVFQPAAYNPPNYVAPQQRANNFGEPAAADARPLTEQEQLAAERPTEDTVWIDSDDDTDVEEAILRANFWLPYSDHNYDPPDPADRIILPTEGPFPCIAGLDEDCNIVKQWMPEDAVGPGSPGTQYRRNQQAGGGLPSTSVASQQQQLPVRHNIQNRPMVAAQPFSIGGNQVEYGGMDSRMQQRGVVRDGPQYRVMNDFGNGLPMRGLLPPRNSPAANAINRAREQQQQMYHQAGARGSLQQRAAPAPADPTPGSYQHIVNAVPGGGANPMRRVPPQARPGMIGGAANNNRARPTHVTRPMDTQEFEHPVAPAAAPPHRVVDVAPHRMTPEQRQELQQMNRQRAAPQFPAAAAQRSAEVIVIQQRPGASSRAPRPSMAQEDLLRSPTRRLSERVPQEHQTPVLEPRRFQVKVTDTYSTPIPKASDQLPAQLTEEDPPEESAAAAAPEDVPDAAPEDPPKVILKPTPPHRMTQEEKNAHFARLTTDKEKPTSSTSILPQDAAPPHVPPPPPPLVLRPHHQDETLAMVQSVFESKPRQPDTPKDKETISKIADLLRFSADEFTGQSGSSAAARQRTVSGSAARAQTYQMHHQQQQHHHQMPMDQRKRPSSGRYDALMGAMPLQQQPPPPPSQFQHTDSIAHRPRGRPKGTRHPSVAVQPQRSGGARTLPPRAQTVAMSARNGANAKNSDSESEGIDEAAEESWTMRCHCGMDHGDGDTIECEGCKTWQHMACMGLTLKSNTSKYKCEMCLPRRLPVSKAEAAREQERILNRLRAAARKQKRKSEPVEQKQKSSQPSTSRKSAPMALQQPAEPRVAQLNDYSKQASALLFGMEQTAGADTLLAESRLHKKARRMFVEEAVEALVTTDLVQIRQVILEVNGHVSMSSEVKRQPGGGNCIFMYDGLMKGTAGEDMGDGQELVCIDTKRKGNDTKFTRRSCVPNCVLKHVLGSNATLGIMIVATKDITRNTEVTLPFDADWRESEVELECAEHMKELQACPFESERRRFAAERHRAMDHKKQEAEEARRADEERRRLEEEVRRERAAKTKQMDEAEKARLEAEKAAEKEKKAKERKKMEASAAAAPESTNSITAREERRIQQAEEMFRRQEEEGKRKEARRRSKSVTPGVLEAAGTAAREDAPEASIPVPAPSPPASRRSVSRTTQPSTSSFATPTEPPAKNKRMRSVVPPKSEPASSAKRVRATTVATPKATTANDSRKRTASATGKTPVAKRSKNVAPTSFALALIEKELREQARNSTVLEMILPDYIMNEERSGLLAGQSPDFSEVRAQIEEENRMKERSRKREAKKKAVEKEKKEHRKEPKKTNEPGPAPKSEKAVEKAVEKVEKKPKSPQKPPAKPTAQNPPLKKTEEVDGIEREASESSSKESSVAPEEKKNPKKITFAEYNSRRSQKREAGECSTPPAVTRRGFIPSTEGEDLVNVELSAIPLDDHPSSSNTAPTTTIAPSVGGAPKPTSVVVKSPSTRSRTRGAASESADDAPAEHSMSLQDRVFSMFGSTVDAPAPPPPPASAETNSRRSRSTRWN.

Disordered regions lie at residues 1–102 (MADG…APQQ), 112–131 (AADARPLTEQEQLAAERPTE), 198–227 (EDAVGPGSPGTQYRRNQQAGGGLPSTSVAS), 448–600 (QRPG…VLRP), and 645–781 (TGQS…DEAA). Residues 62 to 71 (HQMENQEFYH) show a composition bias toward basic and acidic residues. Residues 77-100 (EPQQIPQIPVFQPAAYNPPNYVAP) show a composition bias toward low complexity. The span at 206–227 (PGTQYRRNQQAGGGLPSTSVAS) shows a compositional bias: polar residues. The segment covering 554–573 (MTQEEKNAHFARLTTDKEKP) has biased composition (basic and acidic residues). Over residues 587–597 (PHVPPPPPPLV) the composition is skewed to pro residues. Over residues 645-669 (TGQSGSSAAARQRTVSGSAARAQTY) the composition is skewed to polar residues. The span at 723–733 (HRPRGRPKGTR) shows a compositional bias: basic residues. Acidic residues predominate over residues 772–781 (SESEGIDEAA). The PHD-type zinc-finger motif lies at 786 to 834 (TMRCHCGMDHGDGDTIECEGCKTWQHMACMGLTLKSNTSKYKCEMCLPR). Residues 857-895 (AARKQKRKSEPVEQKQKSSQPSTSRKSAPMALQQPAEPR) are disordered. A compositionally biased stretch (polar residues) spans 873–882 (KSSQPSTSRK). The SET domain maps to 965–1056 (MSSEVKRQPG…RNTEVTLPFD (92 aa)). 2 stretches are compositionally biased toward basic and acidic residues: residues 1089 to 1157 (AERH…KKME) and 1172 to 1194 (AREERRIQQAEEMFRRQEEEGKR). 2 disordered regions span residues 1089 to 1318 (AERH…NVAP) and 1356 to 1623 (LLAG…TRWN). Residues 1093–1201 (RAMDHKKQEA…GKRKEARRRS (109 aa)) adopt a coiled-coil conformation. The segment covering 1242–1252 (TTQPSTSSFAT) has biased composition (polar residues). Positions 1282–1293 (ATTVATPKATTA) are enriched in low complexity. Residues 1364-1401 (FSEVRAQIEEENRMKERSRKREAKKKAVEKEKKEHRKE) are a coiled coil. Basic and acidic residues-rich tracts occupy residues 1365–1378 (SEVRAQIEEENRMK), 1388–1406 (KKAVEKEKKEHRKEPKKTN), 1413–1429 (KSEKAVEKAVEKVEKKP), and 1447–1464 (KKTEEVDGIEREASESSS). Positions 1533-1544 (SSSNTAPTTTIA) are enriched in polar residues.

It belongs to the class V-like SAM-binding methyltransferase superfamily. In terms of tissue distribution, predominantly expressed in the germline (at protein level).

It is found in the nucleus. It catalyses the reaction L-lysyl-[histone] + S-adenosyl-L-methionine = N(6)-methyl-L-lysyl-[histone] + S-adenosyl-L-homocysteine + H(+). Its function is as follows. Histone methyltransferase. Might play a role in transcriptional regulation. Together with set-26, negatively regulates lifespan in a germline-independent, partially daf-16-dependent fashion. Together with set-26, plays a role in germline development and maintenance and might play a role in the restriction of the trimethylation mark on histone H3 'Lys-4'(H3K4me3) to target genes specifically in the germline. This Caenorhabditis elegans protein is Histone-lysine N-methyltransferase set-9.